A 322-amino-acid polypeptide reads, in one-letter code: tRNA uridine(34) hydroxylase (322 aa).

A Rhodanese domain is found at 125–219 (QSPDTVVIDA…YGKDPEVQGK (95 aa)). The Cysteine persulfide intermediate role is filled by C179.

This sequence belongs to the TrhO family.

It catalyses the reaction uridine(34) in tRNA + AH2 + O2 = 5-hydroxyuridine(34) in tRNA + A + H2O. In terms of biological role, catalyzes oxygen-dependent 5-hydroxyuridine (ho5U) modification at position 34 in tRNAs. The polypeptide is tRNA uridine(34) hydroxylase (Bacillus pumilus (strain SAFR-032)).